A 66-amino-acid polypeptide reads, in one-letter code: MKTNDIRELTTAEIETKVKALKEELFNLRFQLATGQLENPTRIREVRKAIARMKTVVREREIGINR.

This sequence belongs to the universal ribosomal protein uL29 family.

The polypeptide is Large ribosomal subunit protein uL29 (Bacillus anthracis (strain CDC 684 / NRRL 3495)).